A 362-amino-acid chain; its full sequence is Phosphate acyltransferase (362 aa).

The tract at residues 343-362 is disordered; that stretch reads TKKISTSTINPKTSETTKES. Residues 344–356 are compositionally biased toward polar residues; sequence KKISTSTINPKTS.

Belongs to the PlsX family. In terms of assembly, homodimer. Probably interacts with PlsY.

The protein localises to the cytoplasm. The enzyme catalyses a fatty acyl-[ACP] + phosphate = an acyl phosphate + holo-[ACP]. The protein operates within lipid metabolism; phospholipid metabolism. Functionally, catalyzes the reversible formation of acyl-phosphate (acyl-PO(4)) from acyl-[acyl-carrier-protein] (acyl-ACP). This enzyme utilizes acyl-ACP as fatty acyl donor, but not acyl-CoA. The polypeptide is Phosphate acyltransferase (Aster yellows witches'-broom phytoplasma (strain AYWB)).